The sequence spans 358 residues: Adenosine deaminase (358 aa).

Residues histidine 14 and histidine 16 each coordinate Zn(2+). Residues histidine 16, aspartate 18, and glycine 183 each contribute to the substrate site. Position 212 (histidine 212) interacts with Zn(2+). The active-site Proton donor is glutamate 215. Aspartate 294 provides a ligand contact to Zn(2+). Aspartate 295 is a binding site for substrate.

The protein belongs to the metallo-dependent hydrolases superfamily. Adenosine and AMP deaminases family. Zn(2+) is required as a cofactor.

It is found in the cell membrane. The protein resides in the cell junction. Its subcellular location is the cytoplasmic vesicle lumen. The protein localises to the cytoplasm. It localises to the lysosome. It carries out the reaction adenosine + H2O + H(+) = inosine + NH4(+). The enzyme catalyses 2'-deoxyadenosine + H2O + H(+) = 2'-deoxyinosine + NH4(+). Catalyzes the hydrolytic deamination of adenosine and 2-deoxyadenosine. Plays an important role in purine metabolism and in adenosine homeostasis. Modulates signaling by extracellular adenosine, and so contributes indirectly to cellular signaling events. May act as a positive regulator of T-cell coactivation. This is Adenosine deaminase (ada) from Xenopus tropicalis (Western clawed frog).